Consider the following 2131-residue polypeptide: Sodium channel protein para (2131 aa).

Residues 1 to 148 lie on the Cytoplasmic side of the membrane; it reads MTEDSDSISE…FNPIRRVAIY (148 aa). Residues 35-48 are compositionally biased toward basic and acidic residues; sequence HEKQKELERKRAEG. A disordered region spans residues 35 to 84; the sequence is HEKQKELERKRAEGEVPQYGRKKKQKEIRYDDEDEDEGPQPDPTLEQGVP. A compositionally biased stretch (acidic residues) spans 64-73; sequence YDDEDEDEGP. One copy of the I repeat lies at 134 to 467; that stretch reads WMLDPFNPIR…AAKAAKLEER (334 aa). Residues 149–172 traverse the membrane as a helical segment; sequence ILVHPLFSLFIITTILVNCILMIM. The Extracellular portion of the chain corresponds to 173 to 180; that stretch reads PTTPTVES. The chain crosses the membrane as a helical span at residues 181 to 199; that stretch reads TEVIFTGIYTFESAVKVMA. The Cytoplasmic portion of the chain corresponds to 200-212; it reads RGFILCPFTYLRD. The chain crosses the membrane as a helical span at residues 213–231; that stretch reads AWNWLDFVVIALAYVTMGI. Residues 232-237 are Extracellular-facing; that stretch reads DLGNLA. Residues 238 to 257 traverse the membrane as a helical; Voltage-sensor segment; it reads ALRTFRVLRALKTVAIVPGL. Residues 258-273 lie on the Cytoplasmic side of the membrane; it reads KTIVGAVIESVKNLRD. The helical transmembrane segment at 274-297 threads the bilayer; that stretch reads VIILTMFSLSVFALMGLQIYMGVL. The Extracellular segment spans residues 298–373; it reads TQKCIKKFPL…PNYGYTSFDS (76 aa). Cys301 and Cys350 are oxidised to a cystine. 3 N-linked (GlcNAc...) asparagine glycosylation sites follow: Asn313, Asn325, and Asn343. An intramembrane region (pore-forming) is located at residues 374–398; the sequence is FGWAFLSAFRLMTQDFWEDLYQLVL. Over 399 to 405 the chain is Extracellular; the sequence is RAAGPWH. The helical transmembrane segment at 406–427 threads the bilayer; that stretch reads MLFFIVIIFLGSFYLVNLILAI. The Cytoplasmic segment spans residues 428-812; it reads VAMSYDELQK…VWLKFQEWVS (385 aa). A phosphoserine; by PKA mark is found at Ser553 and Ser570. 2 disordered regions span residues 553–572 and 671–691; these read STTSLSLPGSPFNIRRGSRS and KESKLRNRNTRNQSVGATNGG. Positions 680–691 are enriched in polar residues; the sequence is TRNQSVGATNGG. Residues 799-1069 form an II repeat; that stretch reads DCCWVWLKFQ…IAEAFNRIGR (271 aa). The helical transmembrane segment at 813–837 threads the bilayer; sequence LIVFDPFVELFITLCIVVNTMFMAM. Topologically, residues 838-848 are extracellular; sequence DHHDMNKEMER. A helical membrane pass occupies residues 849-873; it reads VLKSGNYFFTATFAIEATMKLMAMS. Over 874 to 880 the chain is Cytoplasmic; it reads PKYYFQE. A helical membrane pass occupies residues 881–900; sequence GWNIFDFIIVALSLLELGLE. Topologically, residues 901 to 906 are extracellular; it reads GVQGLS. A helical; Voltage-sensor transmembrane segment spans residues 907 to 926; the sequence is VLRSFRLLRVFKLAKSWPTL. The Cytoplasmic portion of the chain corresponds to 927 to 941; it reads NLLISIMGRTMGALG. The chain crosses the membrane as a helical span at residues 942-963; the sequence is NLTFVLCIIIFIFAVMGMQLFG. Over 964 to 985 the chain is Extracellular; the sequence is KNYHDHKDRFPDGDLPRWNFTD. A glycan (N-linked (GlcNAc...) asparagine) is linked at Asn982. An intramembrane region (pore-forming) is located at residues 986–1006; sequence FMHSFMIVFRVLCGEWIESMW. The Extracellular segment spans residues 1007–1013; the sequence is DCMYVGD. Cysteines 1008 and 1016 form a disulfide. The helical transmembrane segment at 1014 to 1041 threads the bilayer; that stretch reads VSCIPFFLATVVIGNLVVLNLFLALLLS. The Cytoplasmic portion of the chain corresponds to 1042-1296; the sequence is NFGSSSLSAP…WGNLRLKTFQ (255 aa). Residues 1166 to 1240 are disordered; it reads DMKNNKPKKS…LDEEGECEEG (75 aa). The span at 1177–1194 shows a compositional bias: polar residues; that stretch reads YLNNATDDDTASINSYGS. The span at 1199–1225 shows a compositional bias: basic and acidic residues; the sequence is PFKDESHKGSAETMEGEEKRDASKEDL. Acidic residues predominate over residues 1226–1240; sequence GLDEELDEEGECEEG. The III repeat unit spans residues 1284–1591; sequence WQGWGNLRLK…QKKYYNAMKK (308 aa). A helical transmembrane segment spans residues 1297–1320; the sequence is LIENKYFETAVITMILMSSLALAL. At 1321-1334 the chain is on the extracellular side; it reads EDVHLPQRPILQDI. The chain crosses the membrane as a helical span at residues 1335 to 1359; that stretch reads LYYMDRIFTVIFFLEMLIKWLALGF. Topologically, residues 1360–1365 are cytoplasmic; that stretch reads KVYFTN. Residues 1366 to 1387 traverse the membrane as a helical segment; that stretch reads AWCWLDFVIVMVSLINFVASLV. The Extracellular segment spans residues 1388–1391; sequence GAGG. Residues 1392–1413 form a helical; Voltage-sensor membrane-spanning segment; it reads IQAFKTMRTLRALRPLRAMSRM. Residues 1414 to 1432 lie on the Cytoplasmic side of the membrane; the sequence is QGMRVVVNALVQAIPSIFN. Residues 1433–1454 form a helical membrane-spanning segment; it reads VLLVCLIFWLIFAIMGVQLFAG. Residues 1455 to 1495 are Extracellular-facing; the sequence is KYFKCEDMNGTKLSHEIIPNRNACESENYTWVNSAMNFDHV. Residues Asn1463 and Asn1482 are each glycosylated (N-linked (GlcNAc...) asparagine). The segment at residues 1496–1517 is an intramembrane region (pore-forming); sequence GNAYLCLFQVATFKGWIQIMND. The Extracellular portion of the chain corresponds to 1518–1533; that stretch reads AIDSREVDKQPIRETN. Residues 1534-1560 form a helical membrane-spanning segment; the sequence is IYMYLYFVFFIIFGSFFTLNLFIGVII. The Cytoplasmic segment spans residues 1561–1614; sequence DNFNEQKKKAGGSLEMFMTEDQKKYYNAMKKMGSKKPLKAIPRPRWRPQAIVFE. The IV repeat unit spans residues 1601 to 1862; it reads IPRPRWRPQA…NMYIAVILEN (262 aa). Residues 1615-1638 form a helical membrane-spanning segment; that stretch reads IVTDKKFDIIIMLFIGLNMFTMTL. The Extracellular portion of the chain corresponds to 1639–1649; the sequence is DRYDASDTYNA. Residues 1650–1673 form a helical membrane-spanning segment; it reads VLDYLNAIFVVIFSSECLLKIFAL. Residues 1674–1679 lie on the Cytoplasmic side of the membrane; that stretch reads RYHYFI. Residues 1680–1703 traverse the membrane as a helical segment; it reads EPWNLFDVVVVILSILGLVLSDII. At 1704–1713 the chain is on the extracellular side; that stretch reads EKYFVSPTLL. A helical; Voltage-sensor membrane pass occupies residues 1714 to 1735; sequence RVVRVAKVGRVLRLVKGAKGIR. Residues 1736–1750 are Cytoplasmic-facing; sequence TLLFALAMSLPALFN. Residues 1751 to 1773 form a helical membrane-spanning segment; that stretch reads ICLLLFLVMFIFAIFGMSFFMHV. Over 1774 to 1787 the chain is Extracellular; that stretch reads KEKSGINDVYNFKT. An intramembrane region (pore-forming) is located at residues 1788 to 1810; it reads FGQSMILLFQMSTSAGWDGVLDA. The Extracellular portion of the chain corresponds to 1811 to 1835; it reads IINEEACDPPDNDKGYPGNCGSATV. A helical membrane pass occupies residues 1836–1860; sequence GITFLLSYLVISFLIVINMYIAVIL. Topologically, residues 1861–2131 are cytoplasmic; the sequence is ENYSQATEDV…PSITSRTADV (271 aa). Positions 1877 to 1912 constitute an EF-hand domain; the sequence is DDYDMYYEIWQQFDPEGTQYIRYDQLSEFLDVLEPP. Positions 2001-2096 are disordered; it reads HKARGEGGGS…GSPGAGSAGR (96 aa). Residues 2021-2035 are compositionally biased toward acidic residues; that stretch reads GDPDAGDPAPDEATD. Over residues 2068–2088 the composition is skewed to low complexity; sequence AAAAAAAAAAAAAAGTTTAGS.

This sequence belongs to the sodium channel (TC 1.A.1.10) family. Para subfamily.

The protein resides in the cell membrane. Its function is as follows. Mediates the voltage-dependent sodium ion permeability of excitable membranes. Assuming opened or closed conformations in response to the voltage difference across the membrane, the protein forms a sodium-selective channel through which Na(+) ions may pass in accordance with their electrochemical gradient. The chain is Sodium channel protein para (para) from Drosophila melanogaster (Fruit fly).